A 1379-amino-acid polypeptide reads, in one-letter code: DNA-directed RNA polymerase subunit beta (1379 aa).

Belongs to the RNA polymerase beta chain family. The RNAP catalytic core consists of 2 alpha, 1 beta, 1 beta' and 1 omega subunit. When a sigma factor is associated with the core the holoenzyme is formed, which can initiate transcription.

It carries out the reaction RNA(n) + a ribonucleoside 5'-triphosphate = RNA(n+1) + diphosphate. Functionally, DNA-dependent RNA polymerase catalyzes the transcription of DNA into RNA using the four ribonucleoside triphosphates as substrates. This chain is DNA-directed RNA polymerase subunit beta, found in Chelativorans sp. (strain BNC1).